A 634-amino-acid polypeptide reads, in one-letter code: MINIEDISKSSNQSEEKQLKSTSTSSKPKYSFVAKSLFKGSNNITPYYLSTSNTFQCVASESIQTWLLSDDGHIFTSSGNFVLDVSSGGYFVELVQLNSNSKTQIWTIDTTNNKIQPGNGKYLDIDSLNICVAPLNGNATQKWTTFRRAPIPTGNWGYFQSKQLDSNNNYWGLSVLNNSTSYNTSVVMNKVQAKSIGQIWQMTNDGHILSRLDGNLVLDIGPSIDGSKTNYHLNTNVYKANDLMQQWGINENNQIFNQYYPNLCIGFVGELGVDSTVNCVLAQPSSASDINFQWIANPTYSLNQIVSEVPEPFPAYTSGDLLASYQYLSDDATNGYTDDIRSLYTSINVNLEIFYVNVTNATCPSSIHSTEDFSYVQNQIKNELTYAINVRLVFDNYSGFYSKLFSQGSTNLTNLANLINVDMSSDQVVNGDYTDAITSVFYAIISEIPIGGSIIANISESAVQFGELYAESNDSGPSTYQVTLSKLYDHLNENYENEMANAQRIKNTILQDWGMMSKTFALCFLPTNNPSSLNINGLDFQKISTIASLAYQTAIIQMLLPTNYQIYFTPAGYYAPVSSDDYSYTDSTGTYIMAEIDNCNSHPPKALTGFKTRSFHIFLWLEFSYLCDLLQYGR.

The segment at 1 to 23 (MINIEDISKSSNQSEEKQLKSTS) is disordered. Ricin B-type lectin domains are found at residues 27–146 (KPKY…WTTF) and 117–250 (PGNG…WGIN).

Belongs to the cup family.

It localises to the cytoplasm. The protein localises to the membrane. In terms of biological role, may play an important role in stabilizing and/or regulating the cell membrane during Ca(2+) stress or certain stages of development. In Dictyostelium discoideum (Social amoeba), this protein is Calcium up-regulated protein D (cupD).